The primary structure comprises 536 residues: Keratin, type II cytoskeletal 4 (536 aa).

Positions 1-145 are head; sequence MISRQSSVRG…DPEIQKIRTA (145 aa). Arginine 13 is modified (omega-N-methylarginine). Positions 146–181 are coil 1A; it reads EREQIKTLNNKFASFIDKVRFLEQQNKVLETKWNLL. In terms of domain architecture, IF rod spans 146–457; that stretch reads EREQIKTLNN…KLLEGEECRM (312 aa). A linker 1 region spans residues 182–200; that stretch reads QQQTTTTSPRNLDPFFETY. The coil 1B stretch occupies residues 201–293; the sequence is INALRKNLDT…LYEAELSQMQ (93 aa). The linker 12 stretch occupies residues 294–316; it reads THVSDTSVVLSMDNNRNLDLDGI. The interval 317-454 is coil 2; the sequence is IAEVRAQYEE…TYRKLLEGEE (138 aa). The tract at residues 455-524 is tail; it reads CRMSGECKSA…TSSATITKRS (70 aa). Positions 515–536 are disordered; sequence TSSATITKRSPRTRQDPDGLQP. Basic and acidic residues predominate over residues 527 to 536; that stretch reads TRQDPDGLQP.

It belongs to the intermediate filament family. In terms of assembly, heterotetramer of two type I and two type II keratins. keratin-4 is generally associated with keratin-13.

The sequence is that of Keratin, type II cytoskeletal 4 from Rattus norvegicus (Rat).